The primary structure comprises 775 residues: Cation channel sperm-associated protein subunit epsilon-like protein (775 aa).

The first 20 residues, 1 to 20, serve as a signal peptide directing secretion; it reads MLARRVVAALLLWLSCCVSA. Residues Asn62 and Asn114 are each glycosylated (N-linked (GlcNAc...) asparagine).

It belongs to the CATSPERD family.

This is Cation channel sperm-associated protein subunit epsilon-like protein from Mus musculus (Mouse).